The primary structure comprises 126 residues: Large ribosomal subunit protein mL55 (126 aa).

Residues 1 to 34 constitute a mitochondrion transit peptide; the sequence is MSAKGSLLRLLWQCGMTRAAPESCRYLYTSSWRA. S86 is modified (phosphoserine).

Belongs to the mitochondrion-specific ribosomal protein mL55 family. As to quaternary structure, component of the mitochondrial ribosome large subunit (39S) which comprises a 16S rRNA and about 50 distinct proteins.

The protein localises to the mitochondrion. This Bos taurus (Bovine) protein is Large ribosomal subunit protein mL55 (MRPL55).